We begin with the raw amino-acid sequence, 207 residues long: Protein GET1 (207 aa).

Topologically, residues 1-4 (MPSL) are lumenal. The chain crosses the membrane as a helical span at residues 5–24 (LISVLFLHIAIYIINTIGAS). Residues 25–110 (TIDSLLWLIY…LFDVAVKALR (86 aa)) are Cytoplasmic-facing. The stretch at 44–97 (MAREQHQMKLEVVQLKREMNATSSQDEFAKWAKLRRRHDKALEEYEVKNKQFSR) forms a coiled coil. Residues 111–131 (WAGTSGLILLLQFWFSKTPIF) form a helical membrane-spanning segment. Over 132-155 (TLPPSWIPWQVEWVLSFPRAPMGT) the chain is Lumenal. A helical transmembrane segment spans residues 156–172 (VSIQVWGGACAVMVALV). Topologically, residues 173-207 (GEAIGATVRYLYGSKDSMEAIKVGAGAVEKEKKRQ) are cytoplasmic.

The protein belongs to the WRB/GET1 family. Interacts with GET3.

The protein resides in the endoplasmic reticulum membrane. Required for the post-translational delivery of tail-anchored (TA) proteins to the endoplasmic reticulum. Acts as a membrane receptor for soluble GET3, which recognizes and selectively binds the transmembrane domain of TA proteins in the cytosol. In Paracoccidioides lutzii (strain ATCC MYA-826 / Pb01) (Paracoccidioides brasiliensis), this protein is Protein GET1.